Here is a 326-residue protein sequence, read N- to C-terminus: tRNA(Ile)-lysidine synthase (326 aa).

Residue 23–28 (SGGVDS) participates in ATP binding.

Belongs to the tRNA(Ile)-lysidine synthase family.

The protein localises to the cytoplasm. It carries out the reaction cytidine(34) in tRNA(Ile2) + L-lysine + ATP = lysidine(34) in tRNA(Ile2) + AMP + diphosphate + H(+). Ligates lysine onto the cytidine present at position 34 of the AUA codon-specific tRNA(Ile) that contains the anticodon CAU, in an ATP-dependent manner. Cytidine is converted to lysidine, thus changing the amino acid specificity of the tRNA from methionine to isoleucine. The polypeptide is tRNA(Ile)-lysidine synthase (Wolinella succinogenes (strain ATCC 29543 / DSM 1740 / CCUG 13145 / JCM 31913 / LMG 7466 / NCTC 11488 / FDC 602W) (Vibrio succinogenes)).